The chain runs to 630 residues: Zinc finger CW-type PWWP domain protein 1 (630 aa).

2 disordered regions span residues 1–99 and 130–184; these read MMAA…TSAE and LDEE…TEPS. Composition is skewed to basic and acidic residues over residues 26 to 40, 59 to 81, and 141 to 152; these read LHSE…KEDA, LKKE…KLKA, and TDKKDADPEKVI. The CW-type zinc finger occupies 241–295; the sequence is FGHCVIWVQCSSPKCEKWRQLRGNIDPSVLPDDWSCDQNPDPNYNRCDIPEESWA. Zn(2+) contacts are provided by cysteine 250, cysteine 255, cysteine 276, and cysteine 287. One can recognise a PWWP domain in the interval 308 to 374; the sequence is PGSIIWAKQY…VRMLKNFQEL (67 aa). The tract at residues 430–595 is disordered; that stretch reads DLTLCESNNP…FPPDDDCSSD (166 aa). The stretch at 435-465 forms a coiled coil; the sequence is ESNNPESCLEKEEKDLEEEKEEEEEKKDPTL. The span at 449–459 shows a compositional bias: acidic residues; sequence DLEEEKEEEEE. Residues 514-527 show a composition bias toward basic and acidic residues; it reads GKEEQGNSDLDHPV. Phosphoserine is present on serine 619.

Testis (at protein level). Expressed in thymus, brain, lung, ovary, oviduct and uterus.

The protein localises to the nucleus. Its subcellular location is the chromosome. Dual histone methylation reader specific for PRDM9-catalyzed histone marks (H3K4me3 and H3K36me3) that facilitates the repair of PRDM9-induced meiotic double-strand breaks (DSBs). Essential for male fertility and spermatogenesis. Required for meiosis prophase I progression in male but not in female germ cells. This Mus musculus (Mouse) protein is Zinc finger CW-type PWWP domain protein 1 (Zcwpw1).